The sequence spans 115 residues: Probable 4-amino-4-deoxy-L-arabinose-phosphoundecaprenol flippase subunit ArnE (115 aa).

The next 4 membrane-spanning stretches (helical) occupy residues 1-21, 43-63, 65-85, and 93-113; these read MIVGYLLVVLVSLLTCGGQLC, WLALAVLLLGLGMAVWLNVLQ, LPLSLAYPTLSLNFVLVTLAA, and TTARHWYGVASIMLGILLMSI. In terms of domain architecture, EamA spans 44 to 113; sequence LALAVLLLGL…IMLGILLMSI (70 aa).

The protein belongs to the ArnE family. As to quaternary structure, heterodimer of ArnE and ArnF.

It is found in the cell inner membrane. It participates in bacterial outer membrane biogenesis; lipopolysaccharide biosynthesis. Its function is as follows. Translocates 4-amino-4-deoxy-L-arabinose-phosphoundecaprenol (alpha-L-Ara4N-phosphoundecaprenol) from the cytoplasmic to the periplasmic side of the inner membrane. The sequence is that of Probable 4-amino-4-deoxy-L-arabinose-phosphoundecaprenol flippase subunit ArnE from Serratia proteamaculans (strain 568).